A 293-amino-acid polypeptide reads, in one-letter code: Eukaryotic translation initiation factor 3 subunit F (293 aa).

Residue alanine 2 is modified to N-acetylalanine. One can recognise an MPN domain in the interval 28-159 (ARIHPLVIFN…IKAFVSSNLS (132 aa)).

Belongs to the eIF-3 subunit F family. Component of the eukaryotic translation initiation factor 3 (eIF-3) complex. Binds to TIF3E1 and TIF3H1. As to expression, expressed in inflorescences, leaves, stems, siliques, roots and seedlings. Accumulates at highly levels in pollen grains, developing embryos and root tips.

The protein resides in the cytoplasm. Its function is as follows. Component of the eukaryotic translation initiation factor 3 (eIF-3) complex, which is involved in protein synthesis of a specialized repertoire of mRNAs and, together with other initiation factors, stimulates binding of mRNA and methionyl-tRNAi to the 40S ribosome. The eIF-3 complex specifically targets and initiates translation of a subset of mRNAs involved in cell proliferation (Potential). Involved in cell growth and differentiation, especially during embryogenesis and male gametophyte germination. Regulates sensitivity to sugars (e.g. sucrose). This chain is Eukaryotic translation initiation factor 3 subunit F (TIF3F1), found in Arabidopsis thaliana (Mouse-ear cress).